The primary structure comprises 360 residues: Glyceraldehyde-3-phosphate dehydrogenase (360 aa).

Residues 13–14, Asp35, and Arg82 each bind NAD(+); that span reads RI. D-glyceraldehyde 3-phosphate is bound by residues 153 to 155, Thr184, 213 to 214, and Arg236; these read SCT and TG. Cys154 (nucleophile) is an active-site residue. Asn318 is an NAD(+) binding site.

It belongs to the glyceraldehyde-3-phosphate dehydrogenase family. As to quaternary structure, homotetramer.

The enzyme catalyses D-glyceraldehyde 3-phosphate + phosphate + NAD(+) = (2R)-3-phospho-glyceroyl phosphate + NADH + H(+). Its pathway is carbohydrate degradation; glycolysis; pyruvate from D-glyceraldehyde 3-phosphate: step 1/5. Its function is as follows. Key enzyme in glycolysis that catalyzes the first step of the pathway by converting D-glyceraldehyde 3-phosphate (G3P) into 3-phospho-D-glyceroyl phosphate. Essential for the maintenance of cellular ATP levels and carbohydrate metabolism. The protein is Glyceraldehyde-3-phosphate dehydrogenase of Atriplex nummularia (Old man saltbush).